The sequence spans 539 residues: Netrin-G1 (539 aa).

Residues methionine 1–glycine 28 form the signal peptide. 3 disulfide bridges follow: cysteine 33–cysteine 50, cysteine 72–cysteine 92, and cysteine 80–cysteine 88. A Laminin N-terminal domain is found at aspartate 46–arginine 296. The segment at cysteine 80–glutamate 91 is NGL discriminant loop I. Asparagine 133 carries N-linked (GlcNAc...) asparagine glycosylation. Cysteines 182 and 206 form a disulfide. The segment at glutamate 208–tyrosine 214 is NGL discriminant loop II. The segment at glutamate 273–phenylalanine 275 is NGL discriminant loop III. 15 cysteine pairs are disulfide-bonded: cysteine 297/cysteine 306, cysteine 299/cysteine 315, cysteine 317/cysteine 326, cysteine 329/cysteine 354, cysteine 364/cysteine 373, cysteine 366/cysteine 384, cysteine 387/cysteine 396, cysteine 399/cysteine 417, cysteine 420/cysteine 432, cysteine 422/cysteine 438, cysteine 440/cysteine 449, cysteine 452/cysteine 462, cysteine 467/cysteine 480, cysteine 474/cysteine 486, and cysteine 488/cysteine 497. Laminin EGF-like domains lie at cysteine 297–proline 356, cysteine 364–glutamate 419, and cysteine 420–asparagine 469. Residue asparagine 320 is glycosylated (N-linked (GlcNAc...) asparagine). Residue asparagine 406 is glycosylated (N-linked (GlcNAc...) asparagine). N-linked (GlcNAc...) asparagine glycosylation occurs at asparagine 433. The GPI-anchor amidated serine moiety is linked to residue serine 510. A propeptide spans aspartate 511–phenylalanine 539 (removed in mature form).

Interacts with NGL1. Post-translationally, N-glycosylated. As to expression, highly expressed in the thalamus, with very low expression, if any, in other tissues.

The protein localises to the cell membrane. Involved in controlling patterning and neuronal circuit formation at the laminar, cellular, subcellular and synaptic levels. Promotes neurite outgrowth of both axons and dendrites. This chain is Netrin-G1 (NTNG1), found in Homo sapiens (Human).